A 425-amino-acid chain; its full sequence is Serine--tRNA ligase (425 aa).

232 to 234 (TAE) provides a ligand contact to L-serine. Residues 263-265 (RRE) and V279 each bind ATP. Residue E286 participates in L-serine binding. An ATP-binding site is contributed by 350–353 (EVVS). L-serine is bound at residue T387.

The protein belongs to the class-II aminoacyl-tRNA synthetase family. Type-1 seryl-tRNA synthetase subfamily. Homodimer. The tRNA molecule binds across the dimer.

The protein localises to the cytoplasm. The catalysed reaction is tRNA(Ser) + L-serine + ATP = L-seryl-tRNA(Ser) + AMP + diphosphate + H(+). It carries out the reaction tRNA(Sec) + L-serine + ATP = L-seryl-tRNA(Sec) + AMP + diphosphate + H(+). It participates in aminoacyl-tRNA biosynthesis; selenocysteinyl-tRNA(Sec) biosynthesis; L-seryl-tRNA(Sec) from L-serine and tRNA(Sec): step 1/1. In terms of biological role, catalyzes the attachment of serine to tRNA(Ser). Is also able to aminoacylate tRNA(Sec) with serine, to form the misacylated tRNA L-seryl-tRNA(Sec), which will be further converted into selenocysteinyl-tRNA(Sec). The polypeptide is Serine--tRNA ligase (Methanocorpusculum labreanum (strain ATCC 43576 / DSM 4855 / Z)).